We begin with the raw amino-acid sequence, 365 residues long: Serpentine receptor class epsilon-21 (365 aa).

7 consecutive transmembrane segments (helical) span residues 49–69, 82–102, 116–136, 158–178, 189–209, 250–270, and 292–314; these read ILIN…VFCI, IIIS…FVFI, LLFW…HTLL, VWIA…YAFL, IFIV…IIYF, VVVV…PIIL, and PLVV…LSYY.

It belongs to the nematode receptor-like protein sre family.

The protein resides in the membrane. This is Serpentine receptor class epsilon-21 (sre-21) from Caenorhabditis elegans.